The sequence spans 105 residues: Met repressor (105 aa).

This sequence belongs to the MetJ family. Homodimer.

Its subcellular location is the cytoplasm. In terms of biological role, this regulatory protein, when combined with SAM (S-adenosylmethionine) represses the expression of the methionine regulon and of enzymes involved in SAM synthesis. This is Met repressor from Salmonella dublin (strain CT_02021853).